A 364-amino-acid chain; its full sequence is Lipoyl synthase, mitochondrial (364 aa).

[4Fe-4S] cluster is bound by residues C99, C104, C110, C130, C134, C137, and S345. A Radical SAM core domain is found at 116-334; sequence HSTQTATIML…EQRGNELGFL (219 aa).

Belongs to the radical SAM superfamily. Lipoyl synthase family. The cofactor is [4Fe-4S] cluster.

It localises to the mitochondrion. The catalysed reaction is [[Fe-S] cluster scaffold protein carrying a second [4Fe-4S](2+) cluster] + N(6)-octanoyl-L-lysyl-[protein] + 2 oxidized [2Fe-2S]-[ferredoxin] + 2 S-adenosyl-L-methionine + 4 H(+) = [[Fe-S] cluster scaffold protein] + N(6)-[(R)-dihydrolipoyl]-L-lysyl-[protein] + 4 Fe(3+) + 2 hydrogen sulfide + 2 5'-deoxyadenosine + 2 L-methionine + 2 reduced [2Fe-2S]-[ferredoxin]. It functions in the pathway protein modification; protein lipoylation via endogenous pathway; protein N(6)-(lipoyl)lysine from octanoyl-[acyl-carrier-protein]: step 2/2. Its function is as follows. Catalyzes the radical-mediated insertion of two sulfur atoms into the C-6 and C-8 positions of the octanoyl moiety bound to the lipoyl domains of lipoate-dependent enzymes, thereby converting the octanoylated domains into lipoylated derivatives. This chain is Lipoyl synthase, mitochondrial, found in Drosophila mojavensis (Fruit fly).